A 76-amino-acid polypeptide reads, in one-letter code: Gallerimycin (76 aa).

The signal sequence occupies residues methionine 1–cysteine 19.

The protein belongs to the invertebrate defensin family.

In terms of biological role, has antifungal activity against the entomopathogenic fungus M.nisopliae, but does not display any antifungal activity against S.cerevisiae nor any antimicrobial activity against M.luteus, B.subtilis, and E.coli. This chain is Gallerimycin (LOC113523440), found in Galleria mellonella (Greater wax moth).